The sequence spans 137 residues: MRTLWIVALLLVGVEGSLLELGKMILQETGKNAITSYGSYGCNCGWGHRGQPKDATDRCCFVHKCCYKKLTDCNHKTDRYSYSWKNKAIICEEKNPCLKEMCECDKAVAICLRENLDTYNKKYKAYFKFKCKKPETC.

The N-terminal stretch at 1 to 16 (MRTLWIVALLLVGVEG) is a signal peptide. 7 disulfides stabilise this stretch: C42/C131, C44/C60, C59/C111, C65/C137, C66/C104, C73/C97, and C91/C102. An important for membrane-damaging activities in eukaryotes and bacteria; heparin-binding region spans residues 121–133 (KKYKAYFKFKCKK).

It belongs to the phospholipase A2 family. Group II subfamily. K49 sub-subfamily. Binds to heparin. Expressed by the venom gland.

It localises to the secreted. Its activity is regulated as follows. Heparin and wedelolactone inhibit the myotoxic activity. The PLA2 inhibitor, para-bromophenacyl bromide (BPB), inhibits the myotoxic activity. Functionally, snake venom phospholipase A2 homolog that lacks enzymatic activity. Has myotoxic activities. A model of myotoxic mechanism has been proposed: an apo Lys49-PLA2 is activated by the entrance of a hydrophobic molecule (e.g. fatty acid) at the hydrophobic channel of the protein leading to a reorientation of a monomer. This reorientation causes a transition between 'inactive' to 'active' states, causing alignment of C-terminal and membrane-docking sites (MDoS) side-by-side and putting the membrane-disruption sites (MDiS) in the same plane, exposed to solvent and in a symmetric position for both monomers. The MDoS region stabilizes the toxin on membrane by the interaction of charged residues with phospholipid head groups. Subsequently, the MDiS region destabilizes the membrane with penetration of hydrophobic residues. This insertion causes a disorganization of the membrane, allowing an uncontrolled influx of ions (i.e. calcium and sodium), and eventually triggering irreversible intracellular alterations and cell death. The protein is Basic phospholipase A2 homolog MT1 of Agkistrodon contortrix laticinctus (Broad-banded copperhead).